The chain runs to 121 residues: Small ribosomal subunit protein uS13 (121 aa).

The interval 93-121 is disordered; sequence KGLPMRGQRTRTNARTRKGPRRAAQALKK.

This sequence belongs to the universal ribosomal protein uS13 family. In terms of assembly, part of the 30S ribosomal subunit. Forms a loose heterodimer with protein S19. Forms two bridges to the 50S subunit in the 70S ribosome.

Its function is as follows. Located at the top of the head of the 30S subunit, it contacts several helices of the 16S rRNA. In the 70S ribosome it contacts the 23S rRNA (bridge B1a) and protein L5 of the 50S subunit (bridge B1b), connecting the 2 subunits; these bridges are implicated in subunit movement. Contacts the tRNAs in the A and P-sites. The protein is Small ribosomal subunit protein uS13 of Burkholderia ambifaria (strain ATCC BAA-244 / DSM 16087 / CCUG 44356 / LMG 19182 / AMMD) (Burkholderia cepacia (strain AMMD)).